A 48-amino-acid polypeptide reads, in one-letter code: uncharacterized protein (48 aa).

The interval 1-30 (MLGRTKLGNRNAQANNNAKKKNGFQTHFDS) is disordered.

This is an uncharacterized protein from Bacillus subtilis (strain 168).